The primary structure comprises 315 residues: Porphobilinogen deaminase (315 aa).

An S-(dipyrrolylmethanemethyl)cysteine modification is found at cysteine 234.

Belongs to the HMBS family. Monomer. The cofactor is dipyrromethane.

The catalysed reaction is 4 porphobilinogen + H2O = hydroxymethylbilane + 4 NH4(+). The protein operates within porphyrin-containing compound metabolism; protoporphyrin-IX biosynthesis; coproporphyrinogen-III from 5-aminolevulinate: step 2/4. In terms of biological role, tetrapolymerization of the monopyrrole PBG into the hydroxymethylbilane pre-uroporphyrinogen in several discrete steps. The protein is Porphobilinogen deaminase of Mycolicibacterium paratuberculosis (strain ATCC BAA-968 / K-10) (Mycobacterium paratuberculosis).